The following is a 451-amino-acid chain: Vacuolar cation/proton exchanger 1a (451 aa).

Over M1–Q58 the chain is Cytoplasmic. Residues A9–S37 are disordered. Basic residues predominate over residues L13 to T24. Residues E59–A79 form a helical membrane-spanning segment. The Vacuolar segment spans residues Q80–Q86. The chain crosses the membrane as a helical span at residues V87–L107. The Cytoplasmic portion of the chain corresponds to T108–G120. Residues G121–L141 traverse the membrane as a helical segment. The segment at G128 to V163 is cation selection. At K142 to L153 the chain is on the vacuolar side. A helical membrane pass occupies residues G154–V174. Residues N175–T191 are Cytoplasmic-facing. The helical transmembrane segment at A192 to A212 threads the bilayer. Residues A213–D228 are Vacuolar-facing. A helical transmembrane segment spans residues L229 to L249. Residues K250–P273 are Cytoplasmic-facing. A helical transmembrane segment spans residues A274–L294. Topologically, residues S295–S317 are vacuolar. Residues I318–L338 traverse the membrane as a helical segment. Residues G325–V360 form a cation selection region. At K339–S352 the chain is on the cytoplasmic side. Residues A353–V373 form a helical membrane-spanning segment. Over Q374–D378 the chain is Vacuolar. Residues F379–Q399 traverse the membrane as a helical segment. Over D400–H404 the chain is Cytoplasmic. The chain crosses the membrane as a helical span at residues Y405–A425. Residues R426–A451 lie on the Vacuolar side of the membrane.

This sequence belongs to the Ca(2+):cation antiporter (CaCA) (TC 2.A.19) family. Cation/proton exchanger (CAX) subfamily. As to expression, ubiquitous.

Its subcellular location is the vacuole membrane. In terms of biological role, vacuolar cation/proton exchanger (CAX). Translocates Ca(2+) and other metal ions into vacuoles using the proton gradient formed by H(+)-ATPase and H(+)-pyrophosphatase. The polypeptide is Vacuolar cation/proton exchanger 1a (CAX1a) (Oryza sativa subsp. japonica (Rice)).